The chain runs to 94 residues: Large ribosomal subunit protein bL28 (94 aa).

A disordered region spans residues 1-21; it reads MARRCEVTGRGTVSGNNVSHS. Residues 11-20 are compositionally biased toward polar residues; it reads GTVSGNNVSH.

Belongs to the bacterial ribosomal protein bL28 family.

This chain is Large ribosomal subunit protein bL28, found in Leptospira interrogans serogroup Icterohaemorrhagiae serovar copenhageni (strain Fiocruz L1-130).